The primary structure comprises 222 residues: 7-cyano-7-deazaguanine synthase (222 aa).

8–18 (LSGGMDSTTLA) contributes to the ATP binding site. Zn(2+) contacts are provided by C188, C196, C199, and C202.

It belongs to the QueC family. Zn(2+) is required as a cofactor.

The catalysed reaction is 7-carboxy-7-deazaguanine + NH4(+) + ATP = 7-cyano-7-deazaguanine + ADP + phosphate + H2O + H(+). Its pathway is purine metabolism; 7-cyano-7-deazaguanine biosynthesis. Its function is as follows. Catalyzes the ATP-dependent conversion of 7-carboxy-7-deazaguanine (CDG) to 7-cyano-7-deazaguanine (preQ(0)). This Methanoculleus marisnigri (strain ATCC 35101 / DSM 1498 / JR1) protein is 7-cyano-7-deazaguanine synthase.